Reading from the N-terminus, the 175-residue chain is MGRTLANKQDIVTELKGLVDEAQMAFVVDYQGLTVAEITDLRNRLEASNSVCKVTKNTLMRRAIADADDWQPLTELLKGTNAFVLVKDDPGSAIKAYQAFQKDTKKTELRGGLLEGRLLSSDELKAIGDLPSKEVLIAQIAGAINGVATKLAVGIKEVPNSLARGIKAVSEQTDA.

It belongs to the universal ribosomal protein uL10 family. Part of the ribosomal stalk of the 50S ribosomal subunit. The N-terminus interacts with L11 and the large rRNA to form the base of the stalk. The C-terminus forms an elongated spine to which L12 dimers bind in a sequential fashion forming a multimeric L10(L12)X complex.

Its function is as follows. Forms part of the ribosomal stalk, playing a central role in the interaction of the ribosome with GTP-bound translation factors. The chain is Large ribosomal subunit protein uL10 from Synechococcus elongatus (strain ATCC 33912 / PCC 7942 / FACHB-805) (Anacystis nidulans R2).